We begin with the raw amino-acid sequence, 544 residues long: pH-responsive protein 2 (544 aa).

The N-terminal stretch at Met1–Ala22 is a signal peptide. Asn40 and Asn59 each carry an N-linked (GlcNAc...) asparagine glycan. Cys72 and Cys101 are oxidised to a cystine. Asn147 carries an N-linked (GlcNAc...) asparagine glycan. 5 disulfide bridges follow: Cys214–Cys347, Cys232–Cys263, Cys369–Cys420, Cys378–Cys444, and Cys397–Cys402. An N-linked (GlcNAc...) asparagine glycan is attached at Asn408. Positions Gly469–Lys514 are disordered. A lipid anchor (GPI-anchor amidated serine) is attached at Ser515. A propeptide spans Ala516–Met544 (removed in mature form).

It belongs to the glycosyl hydrolase 72 family.

It is found in the cell membrane. Required for apical cell growth and plays an essential role in morphogenesis. May be integral to the pathogenic ability of the organism. The polypeptide is pH-responsive protein 2 (PHR2) (Candida albicans (strain SC5314 / ATCC MYA-2876) (Yeast)).